The primary structure comprises 266 residues: Type 1 encapsulin shell protein (266 aa).

It belongs to the encapsulin family. Family 1 subfamily. In terms of assembly, this encapsulin nanocompartment is formed by 60 subunits; monomers form 12 pentamers which assemble to form shells. Shells are loaded with 4 encapsulated ferritin-like protein decamers (EncFtn) in a tetrahedral arrangement. A 3 nm gap is consistently seen between the shell and the cargo.

The protein resides in the encapsulin nanocompartment. Functionally, shell component of a type 1 encapsulin nanocompartment. Assembles into proteinaceous shells about 21 nm in diameter. Small pores form at, or close to, the 2-, 3-, and 5-fold symmetry axes. Data analysis suggests the 5-fold pores open and close with maximal and minimal aperatures of 15 and 5 Angstroms. Cargo protein Fer (ferritin-like protein, probably stores iron) is targeted to the interior via its C-terminal extension; empty intact shells can be isolated in the absence of cargo protein. The chain is Type 1 encapsulin shell protein from Haliangium ochraceum (strain DSM 14365 / JCM 11303 / SMP-2).